Here is a 293-residue protein sequence, read N- to C-terminus: N-acetylneuraminate lyase (293 aa).

Residues serine 48 and serine 49 each contribute to the aceneuramate site. Tyrosine 137 acts as the Proton donor in catalysis. Lysine 165 functions as the Schiff-base intermediate with substrate in the catalytic mechanism. 5 residues coordinate aceneuramate: threonine 167, glycine 189, aspartate 191, glutamate 192, and serine 208.

The protein belongs to the DapA family. NanA subfamily. As to quaternary structure, homotetramer.

The protein resides in the cytoplasm. The catalysed reaction is aceneuramate = aldehydo-N-acetyl-D-mannosamine + pyruvate. Its pathway is amino-sugar metabolism; N-acetylneuraminate degradation; D-fructose 6-phosphate from N-acetylneuraminate: step 1/5. Its function is as follows. Catalyzes the reversible aldol cleavage of N-acetylneuraminic acid (sialic acid; Neu5Ac) to form pyruvate and N-acetylmannosamine (ManNAc) via a Schiff base intermediate. The polypeptide is N-acetylneuraminate lyase (Staphylococcus carnosus (strain TM300)).